The following is a 276-amino-acid chain: 2,3,4,5-tetrahydropyridine-2,6-dicarboxylate N-succinyltransferase (276 aa).

Residues Arg104 and Asp141 each coordinate substrate.

The protein belongs to the transferase hexapeptide repeat family. Homotrimer.

Its subcellular location is the cytoplasm. The catalysed reaction is (S)-2,3,4,5-tetrahydrodipicolinate + succinyl-CoA + H2O = (S)-2-succinylamino-6-oxoheptanedioate + CoA. It functions in the pathway amino-acid biosynthesis; L-lysine biosynthesis via DAP pathway; LL-2,6-diaminopimelate from (S)-tetrahydrodipicolinate (succinylase route): step 1/3. This chain is 2,3,4,5-tetrahydropyridine-2,6-dicarboxylate N-succinyltransferase, found in Pseudoalteromonas translucida (strain TAC 125).